The primary structure comprises 2251 residues: U3 small nucleolar RNA-associated protein 10 (2251 aa).

An HEAT repeat occupies 945–983 (VVPLLLTALADAEAAIRLAAIACLAHILAICKYAGDLAK). 2 helical membrane-spanning segments follow: residues 962 to 982 (LAAI…GDLA) and 1460 to 1480 (LLVD…LLVD).

The protein belongs to the HEATR1/UTP10 family. As to quaternary structure, component of the ribosomal small subunit (SSU) processome.

Its subcellular location is the nucleus. The protein localises to the nucleolus. It is found in the membrane. Functionally, involved in nucleolar processing of pre-18S ribosomal RNA. Involved in ribosome biosynthesis. This Mycosarcoma maydis (Corn smut fungus) protein is U3 small nucleolar RNA-associated protein 10.